Here is a 90-residue protein sequence, read N- to C-terminus: Large ribosomal subunit protein bL27 (90 aa).

A disordered region spans residues 1–22 (MAHKKAGGSTRNGRDSNPKMLG).

Belongs to the bacterial ribosomal protein bL27 family.

The sequence is that of Large ribosomal subunit protein bL27 from Coxiella burnetii (strain Dugway 5J108-111).